A 288-amino-acid polypeptide reads, in one-letter code: UDP-3-O-acyl-N-acetylglucosamine deacetylase (288 aa).

Positions 79, 236, and 240 each coordinate Zn(2+). His263 acts as the Proton donor in catalysis.

It belongs to the LpxC family. It depends on Zn(2+) as a cofactor.

The catalysed reaction is a UDP-3-O-[(3R)-3-hydroxyacyl]-N-acetyl-alpha-D-glucosamine + H2O = a UDP-3-O-[(3R)-3-hydroxyacyl]-alpha-D-glucosamine + acetate. It participates in glycolipid biosynthesis; lipid IV(A) biosynthesis; lipid IV(A) from (3R)-3-hydroxytetradecanoyl-[acyl-carrier-protein] and UDP-N-acetyl-alpha-D-glucosamine: step 2/6. Functionally, catalyzes the hydrolysis of UDP-3-O-myristoyl-N-acetylglucosamine to form UDP-3-O-myristoylglucosamine and acetate, the committed step in lipid A biosynthesis. The protein is UDP-3-O-acyl-N-acetylglucosamine deacetylase of Rickettsia africae (strain ESF-5).